Here is a 391-residue protein sequence, read N- to C-terminus: UDP-N-acetylglucosamine--N-acetylmuramyl-(pentapeptide) pyrophosphoryl-undecaprenol N-acetylglucosamine transferase (391 aa).

UDP-N-acetyl-alpha-D-glucosamine-binding positions include 11-13 (TGG), arginine 176, serine 206, and glutamine 312.

This sequence belongs to the glycosyltransferase 28 family. MurG subfamily.

It localises to the cell inner membrane. The catalysed reaction is di-trans,octa-cis-undecaprenyl diphospho-N-acetyl-alpha-D-muramoyl-L-alanyl-D-glutamyl-meso-2,6-diaminopimeloyl-D-alanyl-D-alanine + UDP-N-acetyl-alpha-D-glucosamine = di-trans,octa-cis-undecaprenyl diphospho-[N-acetyl-alpha-D-glucosaminyl-(1-&gt;4)]-N-acetyl-alpha-D-muramoyl-L-alanyl-D-glutamyl-meso-2,6-diaminopimeloyl-D-alanyl-D-alanine + UDP + H(+). The protein operates within cell wall biogenesis; peptidoglycan biosynthesis. Its function is as follows. Cell wall formation. Catalyzes the transfer of a GlcNAc subunit on undecaprenyl-pyrophosphoryl-MurNAc-pentapeptide (lipid intermediate I) to form undecaprenyl-pyrophosphoryl-MurNAc-(pentapeptide)GlcNAc (lipid intermediate II). This Treponema denticola (strain ATCC 35405 / DSM 14222 / CIP 103919 / JCM 8153 / KCTC 15104) protein is UDP-N-acetylglucosamine--N-acetylmuramyl-(pentapeptide) pyrophosphoryl-undecaprenol N-acetylglucosamine transferase.